Consider the following 459-residue polypeptide: Exodeoxyribonuclease 7 large subunit (459 aa).

It belongs to the XseA family. Heterooligomer composed of large and small subunits.

It localises to the cytoplasm. It carries out the reaction Exonucleolytic cleavage in either 5'- to 3'- or 3'- to 5'-direction to yield nucleoside 5'-phosphates.. In terms of biological role, bidirectionally degrades single-stranded DNA into large acid-insoluble oligonucleotides, which are then degraded further into small acid-soluble oligonucleotides. The sequence is that of Exodeoxyribonuclease 7 large subunit from Pseudomonas fluorescens (strain SBW25).